A 577-amino-acid chain; its full sequence is Arginine--tRNA ligase (577 aa).

Residues 122–132 (PNVAKEMHVGH) carry the 'HIGH' region motif.

It belongs to the class-I aminoacyl-tRNA synthetase family. As to quaternary structure, monomer.

It is found in the cytoplasm. It catalyses the reaction tRNA(Arg) + L-arginine + ATP = L-arginyl-tRNA(Arg) + AMP + diphosphate. The sequence is that of Arginine--tRNA ligase from Shigella dysenteriae serotype 1 (strain Sd197).